The chain runs to 142 residues: Large ribosomal subunit protein uL13 (142 aa).

It belongs to the universal ribosomal protein uL13 family. In terms of assembly, part of the 50S ribosomal subunit.

Functionally, this protein is one of the early assembly proteins of the 50S ribosomal subunit, although it is not seen to bind rRNA by itself. It is important during the early stages of 50S assembly. The sequence is that of Large ribosomal subunit protein uL13 from Bordetella petrii (strain ATCC BAA-461 / DSM 12804 / CCUG 43448).